The chain runs to 139 residues: MDEKSILTINVVTPDGSVYENTTDLVICKTTVGEIGIMPNHLPLLASLAIDEVRVKVDDENFDEIAVSGGFVEFSDNTLSVVASAAERKETIDVSRAERAKQRAEKRIEEAKNENNDIDLRRAEVSLRRAINRLNISKH.

The protein belongs to the ATPase epsilon chain family. F-type ATPases have 2 components, CF(1) - the catalytic core - and CF(0) - the membrane proton channel. CF(1) has five subunits: alpha(3), beta(3), gamma(1), delta(1), epsilon(1). CF(0) has three main subunits: a, b and c.

The protein resides in the cell membrane. Produces ATP from ADP in the presence of a proton gradient across the membrane. This is ATP synthase epsilon chain from Ligilactobacillus salivarius (strain UCC118) (Lactobacillus salivarius).